Consider the following 88-residue polypeptide: Phosphocarrier protein HPr (88 aa).

Residues 1–88 form the HPr domain; the sequence is MEKRDFHVVA…ETMKKEGLSE (88 aa). Histidine 15 (pros-phosphohistidine intermediate) is an active-site residue. Residue serine 46 is modified to Phosphoserine; by HPrK/P.

The protein belongs to the HPr family.

Its subcellular location is the cytoplasm. Its activity is regulated as follows. Phosphorylation on Ser-46 inhibits the phosphoryl transfer from enzyme I to HPr. In terms of biological role, general (non sugar-specific) component of the phosphoenolpyruvate-dependent sugar phosphotransferase system (sugar PTS). This major carbohydrate active-transport system catalyzes the phosphorylation of incoming sugar substrates concomitantly with their translocation across the cell membrane. The phosphoryl group from phosphoenolpyruvate (PEP) is transferred to the phosphoryl carrier protein HPr by enzyme I. Phospho-HPr then transfers it to the PTS EIIA domain. P-Ser-HPr interacts with the catabolite control protein A (CcpA), forming a complex that binds to DNA at the catabolite response elements cre, operator sites preceding a large number of catabolite-regulated genes. Thus, P-Ser-HPr is a corepressor in carbon catabolite repression (CCR), a mechanism that allows bacteria to coordinate and optimize the utilization of available carbon sources. P-Ser-HPr also plays a role in inducer exclusion, in which it probably interacts with several non-PTS permeases and inhibits their transport activity. In Latilactobacillus sakei (Lactobacillus sakei), this protein is Phosphocarrier protein HPr (ptsH).